Reading from the N-terminus, the 251-residue chain is Capsid protein (251 aa).

Positions 3–20 (KRDAPWRSMAGTSKVSRN) match the Bipartite nuclear localization signal motif. The Nuclear localization signal signature appears at 35-49 (KAAAWVNRPMYRKPR). The segment at 63-80 (CEGPCKVQSYEQRHDISH) is a zinc-finger region. The Nuclear export signal motif lies at 96 to 117 (ITHRVGKRFCVKSVYILGKIWM). Residues 195-242 (KRFWKVNNYVVYNHQEAGKYENHTENALLLYMACTHASNPVYATLKIR) carry the Bipartite nuclear localization signal motif.

The protein belongs to the geminiviridae capsid protein family. Homomultimer. Binds to single-stranded and double-stranded viral DNA. Interacts (via nuclear localization signals) with host importin alpha-1a.

It localises to the virion. The protein resides in the host nucleus. Encapsidates the viral DNA into characteristic twinned ('geminate') particles. Binds the genomic viral ssDNA and shuttles it into and out of the cell nucleus. The CP of bipartite geminiviruses is not required for cell-to-cell or systemic movement. This chain is Capsid protein, found in Cabbage leaf curl virus (isolate Jamaica) (CaLCuV).